Reading from the N-terminus, the 833-residue chain is Translation initiation factor IF-2 (833 aa).

Residues 1–247 (MTEDVKKADG…ALQQAFTKPA (247 aa)) are disordered. 2 stretches are compositionally biased toward basic and acidic residues: residues 53 to 99 (QKAE…EAKK) and 110 to 152 (VDVE…RYAE). The span at 153–166 (LSEEDAENENSEDY) shows a compositional bias: acidic residues. Residues 187-203 (KENRNRGGKNKVAKAKK) are compositionally biased toward basic residues. A compositionally biased stretch (basic and acidic residues) spans 204 to 227 (GGREDESSKTERESNRRNQKDGKM). The 170-residue stretch at 333–502 (TRAPVVTIMG…LLQSEVLELT (170 aa)) folds into the tr-type G domain. The G1 stretch occupies residues 342–349 (GHVDHGKT). A GTP-binding site is contributed by 342–349 (GHVDHGKT). A G2 region spans residues 367–371 (GITQH). The tract at residues 388 to 391 (DTPG) is G3. GTP-binding positions include 388-392 (DTPGH) and 442-445 (NKID). A G4 region spans residues 442–445 (NKID). The segment at 478-480 (SAK) is G5.

Belongs to the TRAFAC class translation factor GTPase superfamily. Classic translation factor GTPase family. IF-2 subfamily.

The protein localises to the cytoplasm. In terms of biological role, one of the essential components for the initiation of protein synthesis. Protects formylmethionyl-tRNA from spontaneous hydrolysis and promotes its binding to the 30S ribosomal subunits. Also involved in the hydrolysis of GTP during the formation of the 70S ribosomal complex. This chain is Translation initiation factor IF-2 (infB), found in Pasteurella multocida (strain Pm70).